The sequence spans 596 residues: Cis-3-hydroxy-L-proline dehydratase (596 aa).

S67 acts as the Proton acceptor in catalysis.

It belongs to the AcnX family. Monomer. Fe(3+) serves as cofactor.

It catalyses the reaction cis-3-hydroxy-L-proline = 1-pyrroline-2-carboxylate + H2O. Inhibited by Zn(2+). Not inhibited by pyrrole-2-carboxylate nor its derivative 2-thiophenecarboxylate. Catalyzes the dehydration of cis-3-hydroxy-L-proline (c3LHyp) to Delta(1)-pyrroline-2-carboxylate (Pyr2C). No activity with L-proline, trans-4-hydroxy-L-proline (t4LHyp), cis-4-hydroxy-L-proline (c4LHyp), trans-3-hydroxy-L-proline (t3LHyp), D-proline, cis-4-hydroxy-D-proline (c4DHyp), trans-4-hydroxy-D-proline (t4DHyp) or L-serine as substrates. Because of the low catalytic efficiency, C3LHyp is likely not a main physiological substrate of this enzyme in H.jecorina. This Hypocrea jecorina (strain QM6a) (Trichoderma reesei) protein is Cis-3-hydroxy-L-proline dehydratase.